The sequence spans 693 residues: MARKISLDMTRNVGIMAHIDAGKTTTTERILFYTGVERKLKEVHEGQATMDWMEQEQERGITITSAATTCFWKGHRINIIDTPGHVDFTVEVERSLRVLDGAVAVFSAVDGVQPQSETVWRQADKYKVPRLAFFNKMDRIGANFDMCVSDIKEKLGSNPVPIQIPIGAEDQFEGVVDLIEMKEIVWPVDSDQGQHFDVKDIRAELKEKAEETRQYMLESIVETDDALMEKFFGGEEITKEEIIKGLRKATIDNTIVPVVCGTAFKNKGIQALLDAIVNYMPAPTDVAMVEGRDPKNPDVLIDREMSDDAPFAALAFKVMTDPFVGRLTFFRVYSGFVEKGATVLNSTKGKKERMGRILQMHANNREEIEHVYCGDIAAAVGLKDTATGDTLCAENAPIVLEQMEFPEPVISVAVEPKTKNDQEKMGIALSKLAEEDPTFKVRTDEETGQTIISGMGELHLEIIVDRMKREFKVESNVGKPQVAYRETITQSCDQEVKYAKQSGGRGQYGHVKIILEPNPGKEFEFVNKITGGVIPREYIPAVEKGCKEALESGVIAGYPLVDVKVTLYDGSYHEVDSSEMAFKIAGSMALKQAATKAKPVILEPVFKVEVTTPEEYMGDIIGDLNSRRGMVSGMIDRNGAKIITAKVPLSEMFGYATDLRSKSQGRATYSWEFSEYLQVPASIQKQIQEERGK.

The tr-type G domain occupies 8-284 (DMTRNVGIMA…AIVNYMPAPT (277 aa)). GTP is bound by residues 17 to 24 (AHIDAGKT), 81 to 85 (DTPGH), and 135 to 138 (NKMD).

Belongs to the TRAFAC class translation factor GTPase superfamily. Classic translation factor GTPase family. EF-G/EF-2 subfamily.

Its subcellular location is the cytoplasm. Catalyzes the GTP-dependent ribosomal translocation step during translation elongation. During this step, the ribosome changes from the pre-translocational (PRE) to the post-translocational (POST) state as the newly formed A-site-bound peptidyl-tRNA and P-site-bound deacylated tRNA move to the P and E sites, respectively. Catalyzes the coordinated movement of the two tRNA molecules, the mRNA and conformational changes in the ribosome. The polypeptide is Elongation factor G (Fusobacterium nucleatum subsp. nucleatum (strain ATCC 25586 / DSM 15643 / BCRC 10681 / CIP 101130 / JCM 8532 / KCTC 2640 / LMG 13131 / VPI 4355)).